The sequence spans 200 residues: 3-isopropylmalate dehydratase small subunit (200 aa).

Belongs to the LeuD family. LeuD type 1 subfamily. Heterodimer of LeuC and LeuD.

It catalyses the reaction (2R,3S)-3-isopropylmalate = (2S)-2-isopropylmalate. Its pathway is amino-acid biosynthesis; L-leucine biosynthesis; L-leucine from 3-methyl-2-oxobutanoate: step 2/4. Functionally, catalyzes the isomerization between 2-isopropylmalate and 3-isopropylmalate, via the formation of 2-isopropylmaleate. The sequence is that of 3-isopropylmalate dehydratase small subunit from Erythrobacter litoralis (strain HTCC2594).